We begin with the raw amino-acid sequence, 509 residues long: ATP synthase subunit alpha (509 aa).

169–176 is a binding site for ATP; sequence GDRQTGKT.

The protein belongs to the ATPase alpha/beta chains family. In terms of assembly, F-type ATPases have 2 components, CF(1) - the catalytic core - and CF(0) - the membrane proton channel. CF(1) has five subunits: alpha(3), beta(3), gamma(1), delta(1), epsilon(1). CF(0) has three main subunits: a(1), b(2) and c(9-12). The alpha and beta chains form an alternating ring which encloses part of the gamma chain. CF(1) is attached to CF(0) by a central stalk formed by the gamma and epsilon chains, while a peripheral stalk is formed by the delta and b chains.

The protein resides in the cell inner membrane. It catalyses the reaction ATP + H2O + 4 H(+)(in) = ADP + phosphate + 5 H(+)(out). Produces ATP from ADP in the presence of a proton gradient across the membrane. The alpha chain is a regulatory subunit. This is ATP synthase subunit alpha from Brucella anthropi (strain ATCC 49188 / DSM 6882 / CCUG 24695 / JCM 21032 / LMG 3331 / NBRC 15819 / NCTC 12168 / Alc 37) (Ochrobactrum anthropi).